Reading from the N-terminus, the 652-residue chain is Fimbrin-4 (652 aa).

Calponin-homology (CH) domains follow at residues Glu116 to Leu233, Leu261 to Asn364, Ser388 to Met494, and Asp509 to Leu617. 2 actin-binding regions span residues Glu116–Asn364 and Ser388–Leu617. The interval Thr623–Val652 is disordered. Polar residues predominate over residues Ile640–Val652.

Interacts with F-actin.

Its subcellular location is the cytoplasm. It localises to the cytoskeleton. Its function is as follows. Cross-links actin filaments (F-actin). Stabilizes and prevents F-actin depolymerization mediated by profilin. May regulate actin cytoarchitecture, cell cycle, cell division, cell elongation and cytoplasmic tractus. This chain is Fimbrin-4, found in Arabidopsis thaliana (Mouse-ear cress).